The sequence spans 55 residues: UPF0434 protein BARBAKC583_1098 (55 aa).

This sequence belongs to the UPF0434 family.

The sequence is that of UPF0434 protein BARBAKC583_1098 from Bartonella bacilliformis (strain ATCC 35685 / KC583 / Herrer 020/F12,63).